Here is an 86-residue protein sequence, read N- to C-terminus: Putative membrane protein insertion efficiency factor (86 aa).

This sequence belongs to the UPF0161 family.

The protein resides in the cell inner membrane. Could be involved in insertion of integral membrane proteins into the membrane. In Histophilus somni (strain 129Pt) (Haemophilus somnus), this protein is Putative membrane protein insertion efficiency factor.